The following is a 398-amino-acid chain: Acetate kinase (398 aa).

Mg(2+) is bound at residue N7. K14 contributes to the ATP binding site. R91 is a binding site for substrate. Residue D148 is the Proton donor/acceptor of the active site. Residues 208-212 (HLGNG), 283-285 (DSR), and 331-335 (GIGEN) contribute to the ATP site. E384 provides a ligand contact to Mg(2+).

Belongs to the acetokinase family. As to quaternary structure, homodimer. It depends on Mg(2+) as a cofactor. Mn(2+) is required as a cofactor.

It is found in the cytoplasm. It catalyses the reaction acetate + ATP = acetyl phosphate + ADP. It participates in metabolic intermediate biosynthesis; acetyl-CoA biosynthesis; acetyl-CoA from acetate: step 1/2. In terms of biological role, catalyzes the formation of acetyl phosphate from acetate and ATP. Can also catalyze the reverse reaction. The polypeptide is Acetate kinase (Halothermothrix orenii (strain H 168 / OCM 544 / DSM 9562)).